The chain runs to 1001 residues: Sarcoplasmic/endoplasmic reticulum calcium ATPase 1 (1001 aa).

A run of 4 helical transmembrane segments spans residues 49–69 (LWEL…LLAA), 90–110 (EPFV…WQER), 254–273 (DEFG…AVWL), and 296–313 (FKIA…GLPA). Ca(2+)-binding residues include valine 304, alanine 305, isoleucine 307, and glutamate 309. The active-site 4-aspartylphosphate intermediate is aspartate 351. The Mg(2+) site is built by aspartate 351 and threonine 353. Threonine 353 is an ATP binding site. Position 441 is a phosphothreonine (threonine 441). The ATP site is built by glutamate 442, arginine 489, lysine 515, and arginine 560. Threonine 569 carries the post-translational modification Phosphothreonine. Serine 581 is modified (phosphoserine). Threonine 625, glycine 626, aspartate 627, arginine 678, and lysine 684 together coordinate ATP. Aspartate 703 provides a ligand contact to Mg(2+). Asparagine 706 is an ATP binding site. 3 consecutive transmembrane segments (helical) span residues 758–777 (KQFI…CIFL), 788–808 (IPVQ…TALG), and 829–851 (ISGW…TVGA). 5 residues coordinate Ca(2+): asparagine 768, glutamate 771, asparagine 796, threonine 799, and aspartate 800. An interaction with PLN region spans residues 788–808 (IPVQLLWVNLVTDGLPATALG). A disulfide bond links cysteine 876 and cysteine 888. Helical transmembrane passes span 898–917 (TMAL…NSLS), 931–949 (IWLL…LILY), and 965–985 (TQWL…EILK). Glutamate 908 contacts Ca(2+). Residues 932–943 (WLLGSICLSMSL) are interaction with PLN.

This sequence belongs to the cation transport ATPase (P-type) (TC 3.A.3) family. Type IIA subfamily. In terms of assembly, interacts with sarcolipin (SLN). Interacts with phospholamban (PLN). Interacts with myoregulin (MRLN). Interacts with DWORF. Interacts with VMP1. Mg(2+) serves as cofactor. Skeletal muscle, fast twitch muscle (type II) fibers.

Its subcellular location is the endoplasmic reticulum membrane. The protein localises to the sarcoplasmic reticulum membrane. It carries out the reaction Ca(2+)(in) + ATP + H2O = Ca(2+)(out) + ADP + phosphate + H(+). Inhibited by sarcolipin (SLN) and myoregulin (MRLN). Has also been shown to be reversibly inhibited by phospholamban (PLN) at low calcium concentrations in vitro. Dephosphorylated PLN decreases the apparent affinity of the ATPase for calcium and this inhibition is regulated by the phosphorylation of PLN in vitro. Enhanced by DWORF; DWORF increases activity by displacing sarcolipin (SLN), phospholamban (PLN) and myoregulin (MRLN). Functionally, key regulator of striated muscle performance by acting as the major Ca(2+) ATPase responsible for the reuptake of cytosolic Ca(2+) into the sarcoplasmic reticulum. Catalyzes the hydrolysis of ATP coupled with the translocation of calcium from the cytosol to the sarcoplasmic reticulum lumen. Contributes to calcium sequestration involved in muscular excitation/contraction. The chain is Sarcoplasmic/endoplasmic reticulum calcium ATPase 1 from Homo sapiens (Human).